Consider the following 372-residue polypeptide: NAD(P)H-quinone oxidoreductase subunit 1 (372 aa).

Helical transmembrane passes span 27 to 47, 97 to 117, 128 to 148, 166 to 186, 204 to 224, 249 to 269, 308 to 328, and 351 to 371; these read AIWM…GVLV, WLFT…FLIV, VGMG…GLLM, AAQS…IAMM, ILGW…IAAL, YSGM…ILSS, SLGI…AILL, and VGLV…FAFG.

This sequence belongs to the complex I subunit 1 family. As to quaternary structure, NDH-1 is composed of at least 11 different subunits.

The protein resides in the cellular thylakoid membrane. It catalyses the reaction a plastoquinone + NADH + (n+1) H(+)(in) = a plastoquinol + NAD(+) + n H(+)(out). The catalysed reaction is a plastoquinone + NADPH + (n+1) H(+)(in) = a plastoquinol + NADP(+) + n H(+)(out). NDH-1 shuttles electrons from an unknown electron donor, via FMN and iron-sulfur (Fe-S) centers, to quinones in the respiratory and/or the photosynthetic chain. The immediate electron acceptor for the enzyme in this species is believed to be plastoquinone. Couples the redox reaction to proton translocation, and thus conserves the redox energy in a proton gradient. In Nostoc punctiforme (strain ATCC 29133 / PCC 73102), this protein is NAD(P)H-quinone oxidoreductase subunit 1.